The sequence spans 426 residues: MPGAGSRGPSAGDGRLRLARLALVLLGWVSASAPSSSVPSSSTSPAAFLASGSAQPPPAERCPAACECSEAARTVKCVNRNLLEVPADLPPYVRNLFLTGNQMTVLPAGAFARQPPLADLEALNLSGNHLKEVCAGAFEHLPGLRRLDLSHNPLTNLSAFAFAGSNASVSAPSPLEELILNHIVPPEDQRQNGSFEGMVAFEGMVAAALRSGLALRGLTRLELASNHFLFLPRDLLAQLPSLRYLDLRNNSLVSLTYASFRNLTHLESLHLEDNALKVLHNSTLAEWHGLAHVKVFLDNNPWVCDCYMADMVAWLKETEVVPDKARLTCAFPEKMRNRGLLDLNSSDLDCDAVLPQSLQTSYVFLGIVLALIGAIFLLVLYLNRKGIKKWMHNIRDACRDHMEGYHYRYEINADPRLTNLSSNSDV.

Positions 1–31 are cleaved as a signal peptide; it reads MPGAGSRGPSAGDGRLRLARLALVLLGWVSA. Over 32 to 361 the chain is Extracellular; the sequence is SAPSSSVPSS…AVLPQSLQTS (330 aa). Positions 33–47 are enriched in low complexity; sequence APSSSVPSSSTSPAA. The tract at residues 33 to 53 is disordered; it reads APSSSVPSSSTSPAAFLASGS. The 39-residue stretch at 53–91 folds into the LRRNT domain; that stretch reads SAQPPPAERCPAACECSEAARTVKCVNRNLLEVPADLPP. Cystine bridges form between Cys-62-Cys-68 and Cys-66-Cys-77. 7 LRR repeats span residues 92-113, 116-139, 141-163, 172-210, 215-238, 239-261, and 262-281; these read YVRN…AFAR, PLAD…GAFE, LPGL…FAFA, PSPL…AALR, LRGL…LLAQ, LPSL…ASFR, and NLTH…VLHN. Residue Asn-124 is glycosylated (N-linked (GlcNAc...) asparagine). Asn-281 carries an N-linked (GlcNAc...) asparagine glycan. The 64-residue stretch at 289-352 folds into the LRRCT domain; the sequence is GLAHVKVFLD…LNSSDLDCDA (64 aa). 2 disulfides stabilise this stretch: Cys-304–Cys-329 and Cys-306–Cys-350. Residues 362–382 form a helical membrane-spanning segment; that stretch reads YVFLGIVLALIGAIFLLVLYL. Topologically, residues 383–426 are cytoplasmic; the sequence is NRKGIKKWMHNIRDACRDHMEGYHYRYEINADPRLTNLSSNSDV. The residue at position 424 (Ser-424) is a Phosphoserine.

In terms of processing, highly glycosylated. As to expression, highly expressed in embryo and placenta. In adult, expressed only in brain and ovary. Not detected in kidney small intestine, heart, spleen, testis, liver, lung, thymus and stomach.

The protein localises to the cell membrane. May function as an inhibitor of Wnt/beta-catenin signaling by indirectly interacting with LRP6 and blocking Wnt3a-dependent LRP6 internalization. The sequence is that of Trophoblast glycoprotein (Tpbg) from Mus musculus (Mouse).